Reading from the N-terminus, the 223-residue chain is uncharacterized protein (223 aa).

Residues 33–67 (CPICGGKGTLKAIQFIHRIPYFGEVMESTVVCERC) form a C4-type zinc finger.

It belongs to the ZPR1 family.

This is an uncharacterized protein from Pyrococcus horikoshii (strain ATCC 700860 / DSM 12428 / JCM 9974 / NBRC 100139 / OT-3).